Here is a 413-residue protein sequence, read N- to C-terminus: Probable glucan 1,3-beta-glucosidase ARB_04467 (413 aa).

A signal peptide spans 1–17; the sequence is MKFGSLLGLSLVGLSVA. The substrate site is built by Glu46, Glu202, and Tyr262. Residue Glu202 is the Proton donor of the active site. Cys282 and Cys412 are oxidised to a cystine. The active-site Nucleophile is the Glu300.

It belongs to the glycosyl hydrolase 5 (cellulase A) family. Monomer.

It is found in the secreted. The protein localises to the cell wall. The enzyme catalyses Successive hydrolysis of beta-D-glucose units from the non-reducing ends of (1-&gt;3)-beta-D-glucans, releasing alpha-glucose.. Functionally, major glucan 1,3-beta-glucosidase required for cell wall integrity. Beta-glucanases participate in the metabolism of beta-glucan, the main structural component of the cell wall. Can also function biosynthetically as a transglycosylase. Functions to deliver glucan from the cell to the extracellular matrix. Involved in cell-substrate and cell-cell adhesion. In Arthroderma benhamiae (strain ATCC MYA-4681 / CBS 112371) (Trichophyton mentagrophytes), this protein is Probable glucan 1,3-beta-glucosidase ARB_04467.